The chain runs to 111 residues: High mobility group protein Z (111 aa).

The segment at residues 6–72 (PKRPLSAYML…EYNKAVKEYE (67 aa)) is a DNA-binding region (HMG box). At Ser11 the chain carries Phosphoserine. Positions 72–111 (EANGGTDSGAPKKRKKAAAKPAKKAKKKESSEEEEEDESE) are disordered. Positions 82–98 (PKKRKKAAAKPAKKAKK) are enriched in basic residues. A compositionally biased stretch (acidic residues) spans 102 to 111 (SEEEEEDESE).

The protein belongs to the HMGB family.

It localises to the nucleus. It is found in the chromosome. This chain is High mobility group protein Z (HmgZ), found in Drosophila melanogaster (Fruit fly).